We begin with the raw amino-acid sequence, 144 residues long: Cysteine desulfuration protein SufE (144 aa).

Cysteine 51 (cysteine persulfide intermediate) is an active-site residue.

It belongs to the SufE family. In terms of assembly, homodimer. Interacts with SufS.

It localises to the cytoplasm. The protein operates within cofactor biosynthesis; iron-sulfur cluster biosynthesis. Participates in cysteine desulfuration mediated by SufS. Cysteine desulfuration mobilizes sulfur from L-cysteine to yield L-alanine and constitutes an essential step in sulfur metabolism for biosynthesis of a variety of sulfur-containing biomolecules. Functions as a sulfur acceptor for SufS, by mediating the direct transfer of the sulfur atom from the S-sulfanylcysteine of SufS, an intermediate product of cysteine desulfuration process. This chain is Cysteine desulfuration protein SufE, found in Wigglesworthia glossinidia brevipalpis.